The sequence spans 243 residues: Probable transcriptional regulatory protein Smlt3713 (243 aa).

This sequence belongs to the TACO1 family.

The protein localises to the cytoplasm. This chain is Probable transcriptional regulatory protein Smlt3713, found in Stenotrophomonas maltophilia (strain K279a).